Consider the following 417-residue polypeptide: Serine hydroxymethyltransferase (417 aa).

Residues leucine 121 and 125-127 (GHL) each bind (6S)-5,6,7,8-tetrahydrofolate. At lysine 229 the chain carries N6-(pyridoxal phosphate)lysine. Position 355 to 357 (355 to 357 (SPF)) interacts with (6S)-5,6,7,8-tetrahydrofolate.

The protein belongs to the SHMT family. As to quaternary structure, homodimer. Pyridoxal 5'-phosphate is required as a cofactor.

It is found in the cytoplasm. The catalysed reaction is (6R)-5,10-methylene-5,6,7,8-tetrahydrofolate + glycine + H2O = (6S)-5,6,7,8-tetrahydrofolate + L-serine. The protein operates within one-carbon metabolism; tetrahydrofolate interconversion. It functions in the pathway amino-acid biosynthesis; glycine biosynthesis; glycine from L-serine: step 1/1. In terms of biological role, catalyzes the reversible interconversion of serine and glycine with tetrahydrofolate (THF) serving as the one-carbon carrier. This reaction serves as the major source of one-carbon groups required for the biosynthesis of purines, thymidylate, methionine, and other important biomolecules. Also exhibits THF-independent aldolase activity toward beta-hydroxyamino acids, producing glycine and aldehydes, via a retro-aldol mechanism. This chain is Serine hydroxymethyltransferase, found in Buchnera aphidicola subsp. Schizaphis graminum (strain Sg).